A 145-amino-acid polypeptide reads, in one-letter code: MKRVVAAGTFDILHPGHYEFLKFAKSLGDELIVIVARDKTVEKIKGRKPIIPEEQRRAMVEALKPVDKAILGSLNNKLEPIIELKPDIIVLGPDQRTFDEEELKRELKKYDLSPKIVRFNKYIKCPFHSSYDIVKEILKRYGGKE.

ATP-binding positions include 9-10 (TF), 14-17 (HPGH), D94, and Y122.

Belongs to the archaeal FAD synthase family. In terms of assembly, homodimer. A divalent metal cation serves as cofactor.

It carries out the reaction FMN + ATP + H(+) = FAD + diphosphate. It participates in cofactor biosynthesis; FAD biosynthesis; FAD from FMN: step 1/1. Functionally, catalyzes the transfer of the AMP portion of ATP to flavin mononucleotide (FMN) to produce flavin adenine dinucleotide (FAD) coenzyme. The protein is FAD synthase of Methanocaldococcus infernus (strain DSM 11812 / JCM 15783 / ME).